Here is a 246-residue protein sequence, read N- to C-terminus: Osmotin-like protein OSML13 (246 aa).

A signal peptide spans 1 to 21 (MAYLRSSFVFFLLAFVTYTYA). 8 cysteine pairs are disulfide-bonded: cysteine 30–cysteine 225, cysteine 72–cysteine 82, cysteine 87–cysteine 93, cysteine 141–cysteine 213, cysteine 146–cysteine 196, cysteine 154–cysteine 164, cysteine 168–cysteine 177, and cysteine 178–cysteine 183.

It belongs to the thaumatin family.

This Solanum commersonii (Commerson's wild potato) protein is Osmotin-like protein OSML13.